Reading from the N-terminus, the 286-residue chain is Undecaprenyl-diphosphatase (286 aa).

Helical transmembrane passes span 50 to 70, 97 to 117, 127 to 147, 165 to 185, 200 to 220, 230 to 250, and 262 to 282; these read PGVS…IAYF, LGIA…AIKL, LRSV…LALA, GLLV…RSGS, AARF…LVEL, GGVL…WLAI, and TWVF…WWAG.

It belongs to the UppP family.

It localises to the cell inner membrane. It carries out the reaction di-trans,octa-cis-undecaprenyl diphosphate + H2O = di-trans,octa-cis-undecaprenyl phosphate + phosphate + H(+). Functionally, catalyzes the dephosphorylation of undecaprenyl diphosphate (UPP). Confers resistance to bacitracin. The chain is Undecaprenyl-diphosphatase from Synechococcus sp. (strain WH7803).